The following is a 501-amino-acid chain: ATP synthase subunit alpha (501 aa).

169–176 (GDRQTGKT) lines the ATP pocket.

It belongs to the ATPase alpha/beta chains family. F-type ATPases have 2 components, CF(1) - the catalytic core - and CF(0) - the membrane proton channel. CF(1) has five subunits: alpha(3), beta(3), gamma(1), delta(1), epsilon(1). CF(0) has three main subunits: a(1), b(2) and c(9-12). The alpha and beta chains form an alternating ring which encloses part of the gamma chain. CF(1) is attached to CF(0) by a central stalk formed by the gamma and epsilon chains, while a peripheral stalk is formed by the delta and b chains.

It is found in the cell membrane. It carries out the reaction ATP + H2O + 4 H(+)(in) = ADP + phosphate + 5 H(+)(out). In terms of biological role, produces ATP from ADP in the presence of a proton gradient across the membrane. The alpha chain is a regulatory subunit. The sequence is that of ATP synthase subunit alpha from Streptococcus pneumoniae serotype 4 (strain ATCC BAA-334 / TIGR4).